Consider the following 327-residue polypeptide: Methionyl-tRNA formyltransferase (327 aa).

Residue 121–124 (SLLP) coordinates (6S)-5,6,7,8-tetrahydrofolate.

Belongs to the Fmt family.

The catalysed reaction is L-methionyl-tRNA(fMet) + (6R)-10-formyltetrahydrofolate = N-formyl-L-methionyl-tRNA(fMet) + (6S)-5,6,7,8-tetrahydrofolate + H(+). Attaches a formyl group to the free amino group of methionyl-tRNA(fMet). The formyl group appears to play a dual role in the initiator identity of N-formylmethionyl-tRNA by promoting its recognition by IF2 and preventing the misappropriation of this tRNA by the elongation apparatus. This is Methionyl-tRNA formyltransferase from Burkholderia vietnamiensis (strain G4 / LMG 22486) (Burkholderia cepacia (strain R1808)).